Reading from the N-terminus, the 221-residue chain is 7-cyano-7-deazaguanine synthase (221 aa).

Residue 10 to 20 coordinates ATP; the sequence is LSGGLDSTTCM. Zn(2+)-binding residues include C188, C196, C199, and C202.

Belongs to the QueC family. Homodimer. It depends on Zn(2+) as a cofactor.

The enzyme catalyses 7-carboxy-7-deazaguanine + NH4(+) + ATP = 7-cyano-7-deazaguanine + ADP + phosphate + H2O + H(+). Its pathway is purine metabolism; 7-cyano-7-deazaguanine biosynthesis. Functionally, catalyzes the ATP-dependent conversion of 7-carboxy-7-deazaguanine (CDG) to 7-cyano-7-deazaguanine (preQ(0)). In Oceanobacillus iheyensis (strain DSM 14371 / CIP 107618 / JCM 11309 / KCTC 3954 / HTE831), this protein is 7-cyano-7-deazaguanine synthase.